We begin with the raw amino-acid sequence, 478 residues long: Ubiquitin carboxyl-terminal hydrolase calypso (478 aa).

The region spanning 11-239 (GWLELESDPG…IRFNLMAVVP (229 aa)) is the UCH catalytic domain. The active-site Nucleophile is Cys-97. His-176 serves as the catalytic Proton donor. The region spanning 400–428 (NYDEFICTFLSMLAHQGELGDLVSQHLIT) is the ULD domain. The tract at residues 430 to 478 (RKPNMGSVQNSGSRGVVRNYNKKTTTNGSSPKTPSSKRRRGRTKYRKRK) is positively charged C-terminal tail required for binding nucleosomes. The segment covering 432-442 (PNMGSVQNSGS) has biased composition (polar residues). Residues 432–478 (PNMGSVQNSGSRGVVRNYNKKTTTNGSSPKTPSSKRRRGRTKYRKRK) form a disordered region. Residues 464 to 478 (SSKRRRGRTKYRKRK) are compositionally biased toward basic residues.

This sequence belongs to the peptidase C12 family. BAP1 subfamily. In terms of assembly, catalytic component of the polycomb repressive deubiquitinase (PR-DUB) complex, at least composed of caly/calypso, Asx and sba (MBD5/6 homolog). The PR-DUB complex associates with nucleosomes to mediate deubiquitination of histone H2AK118ub1 substrates; the association requires the positively charged C-terminal tail of caly, probably due to direct binding of DNA. Interacts (via ULD domain) with Asx (via DEUBAD domain); the interaction produces a stable heterodimer with a composite binding site for ubiquitin. Homodimerizes (via coiled-coil hinge-region between the UCH and ULD domains) to mediate assembly of 2 copies of the caly-Asx heterodimer into a bisymmetric tetramer; dimerization enhances PR-DUB association with nucleosomes.

It localises to the nucleus. It carries out the reaction Thiol-dependent hydrolysis of ester, thioester, amide, peptide and isopeptide bonds formed by the C-terminal Gly of ubiquitin (a 76-residue protein attached to proteins as an intracellular targeting signal).. Catalytic component of the polycomb repressive deubiquitinase (PR-DUB) complex, a complex that specifically mediates deubiquitination of histone H2A monoubiquitinated at 'Lys-119' (H2AK118ub1). Mediates bisymmetric organization of the PR-DUB complex and is involved in association with nucleosomes to mediate deubiquitination. Does not deubiquitinate monoubiquitinated histone H2B. Required to maintain the transcriptionally repressive state of homeotic genes throughout development. The PR-DUB complex has weak or no activity toward 'Lys-48'- and 'Lys-63'-linked polyubiquitin chains. Polycomb group (PcG) protein. This is Ubiquitin carboxyl-terminal hydrolase calypso from Aedes aegypti (Yellowfever mosquito).